Consider the following 427-residue polypeptide: Proteinase-activated receptor 1 (427 aa).

Residues 1 to 21 (MGPRWLLLWAAGLGLCSPLVS) form the signal peptide. The propeptide at 22 to 41 (ARTRGPRPGTDPTNGTLGPR) is removed for receptor activation. A disordered region spans residues 23 to 87 (RTRGPRPGTD…RSSPPQKSPP (65 aa)). A glycan (N-linked (GlcNAc...) asparagine) is linked at Asn35. The Extracellular segment spans residues 42 to 104 (SFFLRNSNDG…SGYLTSAWLT (63 aa)). Acidic residues predominate over residues 58 to 68 (PEDEDSSEGEF). Residue Asn77 is glycosylated (N-linked (GlcNAc...) asparagine). Residues 105–130 (VFIPSVYTGVFLVSLPLNIMAVVVFV) form a helical membrane-spanning segment. The Cytoplasmic portion of the chain corresponds to 131–139 (LKMKVKKPA). The chain crosses the membrane as a helical span at residues 140 to 159 (VVYMLHLAAADVLFVCVLPF). The Extracellular segment spans residues 160–178 (KISYYFSGSDWRFGSAMCR). Cys177 and Cys256 are joined by a disulfide. A helical membrane pass occupies residues 179-200 (FVTAAFYGNMYASIMLMTAISV). The Cytoplasmic portion of the chain corresponds to 201–220 (DRFLAVVYPIQSLSWRTLGR). A helical membrane pass occupies residues 221–241 (ASFICLAIWAMAIAGVAPLLL). Over 242–270 (QEQATQVPGLNITACHDVLNQTLLEGYYS) the chain is Extracellular. N-linked (GlcNAc...) asparagine glycans are attached at residues Asn252 and Asn261. The helical transmembrane segment at 271-290 (YYFSAFSAVFFFVPLTLSTV) threads the bilayer. At 291-313 (SYVSIIRCLSSSTVANQNKKSRA) the chain is on the cytoplasmic side. The helical transmembrane segment at 314 to 336 (LLLSAAVFCIFILCFGPTNILLL) threads the bilayer. Over 337-351 (LHYAFLSSDPMTEAA) the chain is Extracellular. A helical membrane pass occupies residues 352 to 376 (YFAYLLCVCVSSISCCIDPLIYYYA). At 377-427 (SSECQRHLFAILHCKESSDPGSCNSSGQLMPSKMDTCSSNLSSSLYKKLLT) the chain is on the cytoplasmic side. Position 420 is a phosphoserine (Ser420).

Belongs to the G-protein coupled receptor 1 family. In terms of processing, proteolytic cleavage by thrombin generates a new N-terminus that functions as a tethered ligand. Also proteolytically cleaved by cathepsin CTSG. Post-translationally, phosphorylated in the C-terminal tail; probably mediating desensitization prior to the uncoupling and internalization of the receptor.

It localises to the cell membrane. Its function is as follows. High affinity receptor that binds the activated thrombin, leading to calcium release from intracellular stores. The thrombin-activated receptor signaling pathway is mediated through PTX-insensitive G proteins, activation of phospholipase C resulting in the production of 1D-myo-inositol 1,4,5-trisphosphate (InsP3) which binds to InsP3 receptors causing calcium release from the stores. In astrocytes, the calcium released into the cytosol allows the Ca(2+)-dependent release of L-glutamate into the synaptic cleft through BEST1, that targets the neuronal postsynaptic GRIN2A/NMDAR receptor resulting in the synaptic plasticity regulation. May play a role in platelets activation and in vascular development. Mediates up-regulation of pro-inflammatory cytokines, such as MCP-1/CCL2 and IL6, triggered by coagulation factor Xa (F10) in cardiac fibroblasts and umbilical vein endothelial cells. This is Proteinase-activated receptor 1 from Bos taurus (Bovine).